Reading from the N-terminus, the 536-residue chain is Phosphoenolpyruvate carboxykinase (ATP) (536 aa).

3 residues coordinate substrate: Arg-61, Tyr-195, and Lys-201. ATP is bound by residues Lys-201, His-220, and 236–244 (GLSGTGKTT). Mn(2+)-binding residues include Lys-201 and His-220. A Mn(2+)-binding site is contributed by Asp-257. The ATP site is built by Glu-285, Arg-322, and Thr-447. Arg-322 lines the substrate pocket.

Belongs to the phosphoenolpyruvate carboxykinase (ATP) family. The cofactor is Mn(2+).

It localises to the cytoplasm. It carries out the reaction oxaloacetate + ATP = phosphoenolpyruvate + ADP + CO2. It participates in carbohydrate biosynthesis; gluconeogenesis. Functionally, involved in the gluconeogenesis. Catalyzes the conversion of oxaloacetate (OAA) to phosphoenolpyruvate (PEP) through direct phosphoryl transfer between the nucleoside triphosphate and OAA. This is Phosphoenolpyruvate carboxykinase (ATP) from Sinorhizobium fredii (strain NBRC 101917 / NGR234).